The chain runs to 148 residues: UPF0178 protein BH16190 (148 aa).

It belongs to the UPF0178 family.

This chain is UPF0178 protein BH16190, found in Bartonella henselae (strain ATCC 49882 / DSM 28221 / CCUG 30454 / Houston 1) (Rochalimaea henselae).